The chain runs to 511 residues: Colicin-B (511 aa).

The TonB box motif lies at 17–24 (DTMVVWPS). Helical transmembrane passes span 455–475 (MASAVALSLFSLTLGSALIAF) and 477–497 (LSATVVGFVGVVIAGAIGAFI).

Belongs to the channel forming colicin family.

The protein localises to the cell membrane. Functionally, this colicin is a channel-forming colicin. This class of transmembrane toxins depolarize the cytoplasmic membrane, leading to dissipation of cellular energy. In terms of biological role, colicins are polypeptide toxins produced by and active against E.coli and closely related bacteria. The protein is Colicin-B (cba) of Escherichia coli.